We begin with the raw amino-acid sequence, 136 residues long: uncharacterized protein (136 aa).

The disordered stretch occupies residues 1 to 33; sequence MRDHLPPGLPPDPFADDPCDPSAALEAVEPGQP.

This sequence to M.leprae ML0386.

This is an uncharacterized protein from Mycobacterium tuberculosis (strain CDC 1551 / Oshkosh).